Here is a 115-residue protein sequence, read N- to C-terminus: Large ribosomal subunit protein uL18 (115 aa).

It belongs to the universal ribosomal protein uL18 family. In terms of assembly, part of the 50S ribosomal subunit; part of the 5S rRNA/L5/L18/L25 subcomplex. Contacts the 5S and 23S rRNAs.

Functionally, this is one of the proteins that bind and probably mediate the attachment of the 5S RNA into the large ribosomal subunit, where it forms part of the central protuberance. This Ruthia magnifica subsp. Calyptogena magnifica protein is Large ribosomal subunit protein uL18.